An 899-amino-acid polypeptide reads, in one-letter code: Semaphorin-1A (899 aa).

A compositionally biased stretch (low complexity) spans 1–20; the sequence is MLNSHNTNHNNNSASNSNYN. The segment at 1–24 is disordered; it reads MLNSHNTNHNNNSASNSNYNKGHK. Residues 1–40 lie on the Cytoplasmic side of the membrane; sequence MLNSHNTNHNNNSASNSNYNKGHKMHLKSATAKATIMKHK. Residues 41–61 traverse the membrane as a helical segment; that stretch reads LSKFYGYGWMQVFLLLTVLVI. The Extracellular segment spans residues 62 to 657; it reads GNQSAWQENI…INAQYTVETL (596 aa). N-linked (GlcNAc...) asparagine glycosylation is found at N63, N90, and N117. Residues 74 to 543 enclose the Sema domain; the sequence is KLYVELGPED…TDSQVVAIQL (470 aa). Disulfide bonds link C141-C151 and C169-C178. Residues N187, N207, and N311 are each glycosylated (N-linked (GlcNAc...) asparagine). Intrachain disulfides connect C288–C402 and C312–C361. An N-linked (GlcNAc...) asparagine glycan is attached at N404. Residues 658-678 traverse the membrane as a helical segment; that stretch reads VMAVLAGSIFSLLVGFFTGYF. Residues 679 to 899 are Cytoplasmic-facing; it reads CGRRCHKDED…PKNCSYIYRD (221 aa). Disordered regions lie at residues 735-766 and 798-899; these read VLLPQPPPPNKMHSPKNTLRKPPMHQMHQGPN and VMGD…IYRD. The span at 809-827 shows a compositional bias: polar residues; sequence FSTTRSVKKAVNNTNTRNR. Residues 828–837 are compositionally biased toward basic residues; the sequence is SLGRARRQPP. Residues 847–876 are compositionally biased toward low complexity; the sequence is SNSPQQQQQQSQQPHSSSGSSPVMSNSSSS.

This sequence belongs to the semaphorin family. In terms of tissue distribution, expressed by subsets of neurons and muscles.

Its subcellular location is the cell membrane. Its function is as follows. Involved in growth cone guidance through its role in axonal repulsion. Function in neurons is essential for adult survival, motor neuron survival, and is important for climbing behavior and activity. This Drosophila melanogaster (Fruit fly) protein is Semaphorin-1A.